Reading from the N-terminus, the 287-residue chain is rRNA adenine N-6-methyltransferase (287 aa).

Residues 1-13 (MKKKNHKYRGKKL) show a composition bias toward basic residues. The segment at 1–21 (MKKKNHKYRGKKLNRGESPNF) is disordered. The S-adenosyl-L-methionine site is built by His-25, Met-27, Gly-52, Glu-73, Asp-98, and Asn-114.

The protein belongs to the class I-like SAM-binding methyltransferase superfamily. rRNA adenine N(6)-methyltransferase family.

Functionally, involved in erythromycin resistance. In Bacillus licheniformis, this protein is rRNA adenine N-6-methyltransferase (ermD).